The following is a 119-amino-acid chain: DNA-binding protein inhibitor ID-3 (119 aa).

The bHLH domain maps to 28–80; it reads RGKSPAAEEPLSLLDDMNHCYSRLRELVPGVPRGTQLSQVEILQRVIDYILDL.

Homodimer, and heterodimer with other HLH proteins. Interacts with COPS5 and COPS7A. Interacts with IFI204. Interacts with GATA4 and NKX2-5. Interacts with ANKRD2; both proteins cooperate in myoblast differentiation. Interacts with CLOCK and BMAL1.

Its subcellular location is the nucleus. Transcriptional regulator (lacking a basic DNA binding domain) which negatively regulates the basic helix-loop-helix (bHLH) transcription factors by forming heterodimers and inhibiting their DNA binding and transcriptional activity. Implicated in regulating a variety of cellular processes, including cellular growth, senescence, differentiation, apoptosis, angiogenesis, and neoplastic transformation. Involved in myogenesis by inhibiting skeletal muscle and cardiac myocyte differentiation and promoting muscle precursor cells proliferation. Inhibits the binding of E2A-containing protein complexes to muscle creatine kinase E-box enhancer. Regulates the circadian clock by repressing the transcriptional activator activity of the CLOCK-BMAL1 heterodimer. This Bos taurus (Bovine) protein is DNA-binding protein inhibitor ID-3 (ID3).